The chain runs to 333 residues: Arginase (333 aa).

M1 is subject to N-acetylmethionine. At S16 the chain carries Phosphoserine. Residue T77 is modified to Phosphothreonine. The Mn(2+) site is built by H123, D146, H148, and D150. Substrate-binding positions include 148–152 (HADIN), 159–161 (SGN), and D205. Residues D256 and D258 each contribute to the Mn(2+) site. At T270 the chain carries Phosphothreonine. Residues T270 and E301 each coordinate substrate.

This sequence belongs to the arginase family. In terms of assembly, homotrimer. The cofactor is Mn(2+).

It carries out the reaction L-arginine + H2O = urea + L-ornithine. It functions in the pathway nitrogen metabolism; urea cycle; L-ornithine and urea from L-arginine: step 1/1. This chain is Arginase (CAR1), found in Saccharomyces cerevisiae (strain ATCC 204508 / S288c) (Baker's yeast).